Consider the following 182-residue polypeptide: ATP synthase subunit delta (182 aa).

This sequence belongs to the ATPase delta chain family. As to quaternary structure, F-type ATPases have 2 components, F(1) - the catalytic core - and F(0) - the membrane proton channel. F(1) has five subunits: alpha(3), beta(3), gamma(1), delta(1), epsilon(1). F(0) has three main subunits: a(1), b(2) and c(10-14). The alpha and beta chains form an alternating ring which encloses part of the gamma chain. F(1) is attached to F(0) by a central stalk formed by the gamma and epsilon chains, while a peripheral stalk is formed by the delta and b chains.

Its subcellular location is the cell membrane. Its function is as follows. F(1)F(0) ATP synthase produces ATP from ADP in the presence of a proton or sodium gradient. F-type ATPases consist of two structural domains, F(1) containing the extramembraneous catalytic core and F(0) containing the membrane proton channel, linked together by a central stalk and a peripheral stalk. During catalysis, ATP synthesis in the catalytic domain of F(1) is coupled via a rotary mechanism of the central stalk subunits to proton translocation. Functionally, this protein is part of the stalk that links CF(0) to CF(1). It either transmits conformational changes from CF(0) to CF(1) or is implicated in proton conduction. This chain is ATP synthase subunit delta, found in Lactobacillus gasseri (strain ATCC 33323 / DSM 20243 / BCRC 14619 / CIP 102991 / JCM 1131 / KCTC 3163 / NCIMB 11718 / NCTC 13722 / AM63).